The following is a 205-amino-acid chain: Small ribosomal subunit protein uS4 (205 aa).

Residues 1-46 (MSKRHSAKYKIDRRMGENLWGRPKSPVNSRSYGPGQHGQRRKSKVS) are disordered. Residues 94 to 154 (SRLDAIVYRA…EKSRNMALVL (61 aa)) enclose the S4 RNA-binding domain.

The protein belongs to the universal ribosomal protein uS4 family. Part of the 30S ribosomal subunit. Contacts protein S5. The interaction surface between S4 and S5 is involved in control of translational fidelity.

One of the primary rRNA binding proteins, it binds directly to 16S rRNA where it nucleates assembly of the body of the 30S subunit. In terms of biological role, with S5 and S12 plays an important role in translational accuracy. The protein is Small ribosomal subunit protein uS4 of Caulobacter vibrioides (strain ATCC 19089 / CIP 103742 / CB 15) (Caulobacter crescentus).